The primary structure comprises 123 residues: Large ribosomal subunit protein bL12 (123 aa).

It belongs to the bacterial ribosomal protein bL12 family. In terms of assembly, homodimer. Part of the ribosomal stalk of the 50S ribosomal subunit. Forms a multimeric L10(L12)X complex, where L10 forms an elongated spine to which 2 to 4 L12 dimers bind in a sequential fashion. Binds GTP-bound translation factors.

In terms of biological role, forms part of the ribosomal stalk which helps the ribosome interact with GTP-bound translation factors. Is thus essential for accurate translation. This chain is Large ribosomal subunit protein bL12, found in Desulfotalea psychrophila (strain LSv54 / DSM 12343).